The sequence spans 392 residues: ABSCISIC ACID-INSENSITIVE 5-like protein 4 (392 aa).

Residues 1–22 (MGTHIDINNLGGDTSRGNESKP) are disordered. Residues serine 28, serine 50, and serine 96 each carry the phosphoserine modification. Residue threonine 135 is modified to Phosphothreonine. A disordered region spans residues 266-297 (NMGGAGGTVTATSPGTSSAENNTWSSPVPYVF). A compositionally biased stretch (polar residues) spans 274 to 291 (VTATSPGTSSAENNTWSS). Positions 311-374 (VERRQKRMIK…NSELKEFSKQ (64 aa)) constitute a bZIP domain. The basic motif stretch occupies residues 313–332 (RRQKRMIKNRESAARSRARK). The tract at residues 339-360 (LEAEIESLKLVNQDLQKKQAEI) is leucine-zipper.

The protein belongs to the bZIP family. ABI5 subfamily. As to quaternary structure, DNA-binding heterodimer. Interacts with ABI3 and the AFP proteins AFP1, AFP2, AFP3 and AFP4. Post-translationally, phosphorylated by CPK4, CPK11, SRK2D and SRK2I in vitro.

It localises to the nucleus. Its function is as follows. Binds to the ABA-responsive element (ABRE). Could participate in abscisic acid-regulated gene expression. The sequence is that of ABSCISIC ACID-INSENSITIVE 5-like protein 4 (ABF1) from Arabidopsis thaliana (Mouse-ear cress).